A 516-amino-acid polypeptide reads, in one-letter code: Probable inactive beta-glucosidase 14 (516 aa).

The signal sequence occupies residues 1-23 (MAAAWLVVLLTVHRLLHLSGVSA). A beta-D-glucoside-binding positions include Gln43, His145, and 190 to 191 (NQ). An N-linked (GlcNAc...) asparagine glycan is attached at Asn193. Cys210 and Cys217 are joined by a disulfide. Asn221 and Asn270 each carry an N-linked (GlcNAc...) asparagine glycan. An a beta-D-glucoside-binding site is contributed by Tyr334. A disulfide bridge connects residues Cys342 and Cys347. Residue Glu405 participates in a beta-D-glucoside binding. Glu405 serves as the catalytic Nucleophile. N-linked (GlcNAc...) asparagine glycans are attached at residues Asn415 and Asn423. A beta-D-glucoside contacts are provided by residues Trp454, 461–462 (EW), and Phe470.

Belongs to the glycosyl hydrolase 1 family. As to expression, expressed in flowers and endosperm.

In Oryza sativa subsp. japonica (Rice), this protein is Probable inactive beta-glucosidase 14.